A 100-amino-acid polypeptide reads, in one-letter code: Putative septation protein SpoVG (100 aa).

The protein belongs to the SpoVG family.

Could be involved in septation. This Staphylococcus haemolyticus (strain JCSC1435) protein is Putative septation protein SpoVG.